The primary structure comprises 767 residues: Mst2 complex subunit nto1 (767 aa).

The PHD-type 1 zinc-finger motif lies at 194-244 (DGRCVICNEAECENSNAIVFCDNCNTSVHQNCYGIPFVPEGQWFCKKCLLA). Residues 248–281 (VICCAFCPDRDGAFCTTLDGRWCHTICAIAIPEI) form a C2HC pre-PHD-type zinc finger. The PHD-type 2 zinc finger occupies 305-363 (LVCCICKLRWGTCVQCSDKNCYAAYHITCARRAGFFYKIYSHSASYDSVDMETYCDKHT). The segment covering 724–752 (VTGQSNHALPNSVTKKNGTKQPYTKNSLP) has biased composition (polar residues). Residues 724–767 (VTGQSNHALPNSVTKKNGTKQPYTKNSLPFNERITRSKAKKNYS) are disordered.

Component of the mst2 complex composed of at least eaf6, mst2, nto1, pdp3, ptf1, ptf2 and tfg3.

Its subcellular location is the cytoplasm. The protein localises to the nucleus. Functionally, component of the mst2 complex which is a highly specific H3 lysine 14 (H3K14) acetyltransferase that functions together with gcn5 to regulate global levels of H3K14 acetylation (H3K14ac), critical for DNA damage checkpoint activation. This chain is Mst2 complex subunit nto1 (nto1), found in Schizosaccharomyces pombe (strain 972 / ATCC 24843) (Fission yeast).